Reading from the N-terminus, the 176-residue chain is Tubulin polymerization-promoting protein family member 3 (176 aa).

A disordered region spans residues 132–151; the sequence is TGSHKERFDQTGKGKGKSGR. The segment covering 134–151 has biased composition (basic and acidic residues); the sequence is SHKERFDQTGKGKGKSGR.

It belongs to the TPPP family.

It localises to the cytoplasm. It is found in the cytoskeleton. In terms of biological role, regulator of microtubule dynamic that has microtubule bundling activity. The sequence is that of Tubulin polymerization-promoting protein family member 3 (tppp3) from Xenopus laevis (African clawed frog).